The sequence spans 87 residues: uncharacterized protein (87 aa).

A helical transmembrane segment spans residues 21-41 (LSSSLYSVAFFLFFFPNFLFF).

The protein resides in the membrane. This is an uncharacterized protein from Saccharomyces cerevisiae (strain ATCC 204508 / S288c) (Baker's yeast).